A 344-amino-acid chain; its full sequence is tRNA dimethylallyltransferase (344 aa).

19–26 contributes to the ATP binding site; that stretch reads GPTASGKT. A substrate-binding site is contributed by 21-26; sequence TASGKT.

Belongs to the IPP transferase family. In terms of assembly, monomer. Mg(2+) is required as a cofactor.

The enzyme catalyses adenosine(37) in tRNA + dimethylallyl diphosphate = N(6)-dimethylallyladenosine(37) in tRNA + diphosphate. Its function is as follows. Catalyzes the transfer of a dimethylallyl group onto the adenine at position 37 in tRNAs that read codons beginning with uridine, leading to the formation of N6-(dimethylallyl)adenosine (i(6)A). The protein is tRNA dimethylallyltransferase of Bifidobacterium animalis subsp. lactis (strain AD011).